The following is a 457-amino-acid chain: Phosphomethylpyrimidine synthase (457 aa).

Substrate-binding positions include Asn80, Met109, Tyr139, His175, 195–197, 236–239, and Glu275; these read SRG and DSLR. His279 contributes to the Zn(2+) binding site. Tyr302 lines the substrate pocket. Position 343 (His343) interacts with Zn(2+). [4Fe-4S] cluster is bound by residues Cys423, Cys426, and Cys431.

It belongs to the ThiC family. Requires [4Fe-4S] cluster as cofactor.

The catalysed reaction is 5-amino-1-(5-phospho-beta-D-ribosyl)imidazole + S-adenosyl-L-methionine = 4-amino-2-methyl-5-(phosphooxymethyl)pyrimidine + CO + 5'-deoxyadenosine + formate + L-methionine + 3 H(+). Its pathway is cofactor biosynthesis; thiamine diphosphate biosynthesis. In terms of biological role, catalyzes the synthesis of the hydroxymethylpyrimidine phosphate (HMP-P) moiety of thiamine from aminoimidazole ribotide (AIR) in a radical S-adenosyl-L-methionine (SAM)-dependent reaction. In Nostoc sp. (strain PCC 7120 / SAG 25.82 / UTEX 2576), this protein is Phosphomethylpyrimidine synthase.